The chain runs to 112 residues: T cell receptor alpha variable 17 (112 aa).

The signal sequence occupies residues 1 to 21 (METLLGVSLVILWLQLARVNS). One can recognise an Ig-like domain in the interval 22-112 (QQGEEDPQAL…DTASYFCATD (91 aa)). N-linked (GlcNAc...) asparagine glycans are attached at residues asparagine 38 and asparagine 42. A disulfide bond links cysteine 43 and cysteine 109.

Alpha-beta TR is a heterodimer composed of an alpha and beta chain; disulfide-linked. The alpha-beta TR is associated with the transmembrane signaling CD3 coreceptor proteins to form the TR-CD3 (TcR or TCR). The assembly of alpha-beta TR heterodimers with CD3 occurs in the endoplasmic reticulum where a single alpha-beta TR heterodimer associates with one CD3D-CD3E heterodimer, one CD3G-CD3E heterodimer and one CD247 homodimer forming a stable octameric structure. CD3D-CD3E and CD3G-CD3E heterodimers preferentially associate with TR alpha and TR beta chains, respectively. The association of the CD247 homodimer is the last step of TcR assembly in the endoplasmic reticulum and is required for transport to the cell surface.

The protein resides in the cell membrane. In terms of biological role, v region of the variable domain of T cell receptor (TR) alpha chain that participates in the antigen recognition. Alpha-beta T cell receptors are antigen specific receptors which are essential to the immune response and are present on the cell surface of T lymphocytes. Recognize peptide-major histocompatibility (MH) (pMH) complexes that are displayed by antigen presenting cells (APC), a prerequisite for efficient T cell adaptive immunity against pathogens. Binding of alpha-beta TR to pMH complex initiates TR-CD3 clustering on the cell surface and intracellular activation of LCK that phosphorylates the ITAM motifs of CD3G, CD3D, CD3E and CD247 enabling the recruitment of ZAP70. In turn ZAP70 phosphorylates LAT, which recruits numerous signaling molecules to form the LAT signalosome. The LAT signalosome propagates signal branching to three major signaling pathways, the calcium, the mitogen-activated protein kinase (MAPK) kinase and the nuclear factor NF-kappa-B (NF-kB) pathways, leading to the mobilization of transcription factors that are critical for gene expression and essential for T cell growth and differentiation. The T cell repertoire is generated in the thymus, by V-(D)-J rearrangement. This repertoire is then shaped by intrathymic selection events to generate a peripheral T cell pool of self-MH restricted, non-autoaggressive T cells. Post-thymic interaction of alpha-beta TR with the pMH complexes shapes TR structural and functional avidity. The protein is T cell receptor alpha variable 17 of Homo sapiens (Human).